Here is a 680-residue protein sequence, read N- to C-terminus: Chondroitin proteoglycan 4 (680 aa).

An N-terminal signal peptide occupies residues 1 to 18 (MLRVNLLILLCFVPFSLN). N-linked (GlcNAc...) asparagine glycosylation is found at Asn42, Asn59, Asn72, Asn167, Asn205, Asn458, Asn472, Asn486, Asn498, Asn526, Asn527, Asn556, and Asn604. The segment at 460–680 (TKKAETTKKS…PLTTTLHELY (221 aa)) is disordered. Residues 484-500 (AANTTAETTKTTSANIT) are compositionally biased toward low complexity. A compositionally biased stretch (polar residues) spans 520–530 (SLDTSGNNSTV). Low complexity-rich tracts occupy residues 633–647 (GEAS…SGEV) and 654–669 (SGYS…SSGE). O-linked (Xyl...) (chondroitin sulfate) serine glycans are attached at residues Ser640 and Ser644. Asn664 is a glycosylation site (N-linked (GlcNAc...) asparagine).

This is Chondroitin proteoglycan 4 (cpg-4) from Caenorhabditis briggsae.